Here is a 287-residue protein sequence, read N- to C-terminus: 2-dehydro-3-deoxyphosphooctonate aldolase (287 aa).

This sequence belongs to the KdsA family.

Its subcellular location is the cytoplasm. It carries out the reaction D-arabinose 5-phosphate + phosphoenolpyruvate + H2O = 3-deoxy-alpha-D-manno-2-octulosonate-8-phosphate + phosphate. The protein operates within carbohydrate biosynthesis; 3-deoxy-D-manno-octulosonate biosynthesis; 3-deoxy-D-manno-octulosonate from D-ribulose 5-phosphate: step 2/3. It functions in the pathway bacterial outer membrane biogenesis; lipopolysaccharide biosynthesis. The protein is 2-dehydro-3-deoxyphosphooctonate aldolase of Rhodopseudomonas palustris (strain HaA2).